Reading from the N-terminus, the 262-residue chain is Rhomboid-type serine protease 2 (262 aa).

Topologically, residues 1 to 16 are cytoplasmic; it reads MNWKSYVFPGGHPPAA. A helical transmembrane segment spans residues 17–37; the sequence is LTTGLVVFLTAIYLLSFIFAL. Residues 38–57 lie on the Lumenal side of the membrane; the sequence is REDLSLAPESLFKLQMSRLS. The chain crosses the membrane as a helical span at residues 58 to 78; it reads LYPLIHLSLPHLLFNVLAIWA. Over 79-89 the chain is Cytoplasmic; that stretch reads PLNLFEETHGT. Residues 90–110 traverse the membrane as a helical segment; the sequence is VYTGVFLNLSALFAGILYCLL. Topologically, residues 111–112 are lumenal; that stretch reads GK. A helical membrane pass occupies residues 113–133; the sequence is LLYPEALVAGASGWCFTLFAY. Catalysis depends on serine 124, which acts as the Nucleophile. At 134–151 the chain is on the cytoplasmic side; that stretch reads YSFKESQIRPRTRIFRTD. The chain crosses the membrane as a helical span at residues 152 to 168; that stretch reads YSIPTLYTPLVLLVAIA. The Lumenal portion of the chain corresponds to 169-174; that stretch reads VVIPGS. A helical membrane pass occupies residues 175 to 191; sequence SFWGHFFGLCVGYAIGY. Histidine 179 is a catalytic residue. Topologically, residues 192–262 are cytoplasmic; it reads KESWFNKITP…DNSGTVLGTA (71 aa). Residues 243-262 form a disordered region; that stretch reads STETPLPLHNDNSGTVLGTA. The segment covering 252-262 has biased composition (polar residues); that stretch reads NDNSGTVLGTA.

The protein belongs to the peptidase S54 family. As to quaternary structure, interacts with SNX3.

Its subcellular location is the golgi apparatus membrane. The protein localises to the golgi apparatus. The protein resides in the cis-Golgi network membrane. The enzyme catalyses Cleaves type-1 transmembrane domains using a catalytic dyad composed of serine and histidine that are contributed by different transmembrane domains.. In terms of biological role, probable rhomboid-type serine protease that catalyzes intramembrane proteolysis. This is Rhomboid-type serine protease 2 (RBD2) from Saccharomyces cerevisiae (strain ATCC 204508 / S288c) (Baker's yeast).